Reading from the N-terminus, the 198-residue chain is Nucleoid occlusion factor SlmA (198 aa).

The 61-residue stretch at 11–71 (PNRKHQILES…GLIDFIEESI (61 aa)) folds into the HTH tetR-type domain. Residues 34-53 (TTAKLAAEVGFSEAALYRHF) constitute a DNA-binding region (H-T-H motif).

Belongs to the nucleoid occlusion factor SlmA family. Homodimer. Interacts with FtsZ.

It is found in the cytoplasm. The protein resides in the nucleoid. In terms of biological role, required for nucleoid occlusion (NO) phenomenon, which prevents Z-ring formation and cell division over the nucleoid. Acts as a DNA-associated cell division inhibitor that binds simultaneously chromosomal DNA and FtsZ, and disrupts the assembly of FtsZ polymers. SlmA-DNA-binding sequences (SBS) are dispersed on non-Ter regions of the chromosome, preventing FtsZ polymerization at these regions. In Colwellia psychrerythraea (strain 34H / ATCC BAA-681) (Vibrio psychroerythus), this protein is Nucleoid occlusion factor SlmA.